Reading from the N-terminus, the 468-residue chain is Shaggy-related protein kinase theta (468 aa).

Disordered stretches follow at residues 1-53 and 91-112; these read MNVM…DQST and HANRGEEDKDMEPPIVNGCGTE. Residues 134–418 enclose the Protein kinase domain; sequence YMAQRVVGTG…ALEACAHPFF (285 aa). ATP-binding positions include 140-148 and Lys163; that span reads VGTGSFGVV. Asp259 acts as the Proton acceptor in catalysis. Tyr294 is modified (phosphotyrosine).

This sequence belongs to the protein kinase superfamily. CMGC Ser/Thr protein kinase family. GSK-3 subfamily. Autophosphorylated mainly on threonine and serine residues. In developing pollen.

The enzyme catalyses L-seryl-[protein] + ATP = O-phospho-L-seryl-[protein] + ADP + H(+). It carries out the reaction L-threonyl-[protein] + ATP = O-phospho-L-threonyl-[protein] + ADP + H(+). Its function is as follows. May mediate extracellular signals to regulate transcription in differentiating cells. This chain is Shaggy-related protein kinase theta, found in Brassica napus (Rape).